The sequence spans 478 residues: Phosphoglycerate kinase 2, chloroplastic (478 aa).

A chloroplast-targeting transit peptide spans 1–74 (MASTAATAAL…GKGARGVITM (74 aa)). Ser-78 carries the phosphoserine modification. (2R)-3-phosphoglycerate contacts are provided by Ala-96, Asp-97, Asn-99, Arg-113, Thr-135, His-136, Gly-138, Arg-139, Arg-194, His-226, and Arg-227. Gly-272 provides a ligand contact to ADP. Gly-272 serves as a coordination point for CDP. AMP is bound by residues Lys-274 and Lys-278. Lys-278 is an ATP binding site. ADP is bound at residue Gly-296. Gly-296 provides a ligand contact to CDP. Residues Gly-297 and Gly-369 each contribute to the AMP site. ATP is bound by residues Gly-297 and Gly-369. Residues Gly-394 and Phe-399 each contribute to the CDP site. Phe-399 lines the ADP pocket. Residue Glu-400 coordinates AMP. ATP contacts are provided by Glu-400, Asp-431, and Ser-432. Mg(2+) is bound at residue Asp-431.

This sequence belongs to the phosphoglycerate kinase family. In terms of assembly, monomer. It depends on Mg(2+) as a cofactor.

The protein resides in the plastid. Its subcellular location is the chloroplast. The catalysed reaction is (2R)-3-phosphoglycerate + ATP = (2R)-3-phospho-glyceroyl phosphate + ADP. It functions in the pathway carbohydrate biosynthesis; Calvin cycle. This is Phosphoglycerate kinase 2, chloroplastic from Arabidopsis thaliana (Mouse-ear cress).